We begin with the raw amino-acid sequence, 224 residues long: tRNA (guanine-N(7)-)-methyltransferase (224 aa).

S-adenosyl-L-methionine is bound by residues E54, E79, E106, and D129. The active site involves D129. Residues K133 and D165 each coordinate substrate.

Belongs to the class I-like SAM-binding methyltransferase superfamily. TrmB family.

It catalyses the reaction guanosine(46) in tRNA + S-adenosyl-L-methionine = N(7)-methylguanosine(46) in tRNA + S-adenosyl-L-homocysteine. It participates in tRNA modification; N(7)-methylguanine-tRNA biosynthesis. Functionally, catalyzes the formation of N(7)-methylguanine at position 46 (m7G46) in tRNA. The sequence is that of tRNA (guanine-N(7)-)-methyltransferase from Chlamydia muridarum (strain MoPn / Nigg).